The sequence spans 335 residues: Transcription factor E2F5 (335 aa).

Residues 1–18 (MAAAEPTSSAQPTPQAQA) are compositionally biased toward low complexity. The segment at 1-40 (MAAAEPTSSAQPTPQAQAQPPPHGAPSSQPSAALAGGSSR) is disordered. The DNA-binding element occupies 37-108 (GSSRHEKSLG…KNSIQWKGVG (72 aa)). Positions 66 to 88 (LKAAADTLAVRQKRRIYDITNVL) are leucine-zipper. The DEF box motif lies at 71–108 (DTLAVRQKRRIYDITNVLEGIDLIEKKSKNSIQWKGVG). The tract at residues 109–205 (AGCNTKEVID…GQNGQKKYQI (97 aa)) is dimerization. The tract at residues 226-285 (SKPVVFPVPPPDDLTQPSSQSSTSVTPQKSTMAAQNLPEQHVSERSQTFQQTPAAEVSSG) is disordered. Positions 238 to 256 (DLTQPSSQSSTSVTPQKST) are enriched in low complexity. The interval 277–335 (TPAAEVSSGSISGDIIDELMSSDVFPLLRLSPTPADDYNFNLDDNEGVCDLFDVQILNY) is transactivation. The interval 312–329 (DDYNFNLDDNEGVCDLFD) is RBL2 association.

It belongs to the E2F/DP family. Component of the DRTF1/E2F transcription factor complex. Binds cooperatively with DP-1 to E2F sites. Interaction with retinoblastoma protein RB1 or proteins RBL1 and RBL2 inhibits the E2F transactivation domain. Component of the DREAM complex (also named LINC complex) at least composed of E2F4, E2F5, LIN9, LIN37, LIN52, LIN54, MYBL1, MYBL2, RBL1, RBL2, RBBP4, TFDP1 and TFDP2. The complex exists in quiescent cells where it represses cell cycle-dependent genes. It dissociates in S phase when LIN9, LIN37, LIN52 and LIN54 form a subcomplex that binds to MYBL2.

It localises to the nucleus. In terms of biological role, transcriptional activator that binds to E2F sites, these sites are present in the promoter of many genes whose products are involved in cell proliferation. May mediate growth factor-initiated signal transduction. It is likely involved in the early responses of resting cells to growth factor stimulation. Specifically required for multiciliate cell differentiation: together with MCIDAS and E2F5, binds and activate genes required for centriole biogenesis. The sequence is that of Transcription factor E2F5 (E2f5) from Mus musculus (Mouse).